A 396-amino-acid polypeptide reads, in one-letter code: Elongation factor Tu 1 (396 aa).

The tr-type G domain maps to 10–206 (KPHVNVGTIG…TLDTYIPEPE (197 aa)). Positions 19 to 26 (GHVDHGKT) are G1. Residue 19–26 (GHVDHGKT) participates in GTP binding. Thr26 is a Mg(2+) binding site. A G2 region spans residues 60–64 (GITIN). A G3 region spans residues 81-84 (DCPG). Residues 81 to 85 (DCPGH) and 136 to 139 (NKCD) contribute to the GTP site. A G4 region spans residues 136 to 139 (NKCD). The segment at 174–176 (SAL) is G5.

Belongs to the TRAFAC class translation factor GTPase superfamily. Classic translation factor GTPase family. EF-Tu/EF-1A subfamily. In terms of assembly, monomer.

The protein resides in the cytoplasm. The enzyme catalyses GTP + H2O = GDP + phosphate + H(+). Functionally, GTP hydrolase that promotes the GTP-dependent binding of aminoacyl-tRNA to the A-site of ribosomes during protein biosynthesis. This Psychrobacter sp. (strain PRwf-1) protein is Elongation factor Tu 1.